The following is a 512-amino-acid chain: Cytochrome P450 72A15 (512 aa).

Residues 2 to 22 form a helical membrane-spanning segment; it reads EISVASVTISVVLAVVSWWIW. Position 460 (Cys460) interacts with heme.

The protein belongs to the cytochrome P450 family. Heme is required as a cofactor.

It localises to the membrane. In Arabidopsis thaliana (Mouse-ear cress), this protein is Cytochrome P450 72A15 (CYP72A15).